The following is a 358-amino-acid chain: UDP-N-acetylglucosamine--N-acetylmuramyl-(pentapeptide) pyrophosphoryl-undecaprenol N-acetylglucosamine transferase (358 aa).

UDP-N-acetyl-alpha-D-glucosamine is bound by residues 11–13 (TGG), Arg-163, Ser-191, Ile-245, and Gln-290.

Belongs to the glycosyltransferase 28 family. MurG subfamily.

The protein localises to the cell inner membrane. It carries out the reaction di-trans,octa-cis-undecaprenyl diphospho-N-acetyl-alpha-D-muramoyl-L-alanyl-D-glutamyl-meso-2,6-diaminopimeloyl-D-alanyl-D-alanine + UDP-N-acetyl-alpha-D-glucosamine = di-trans,octa-cis-undecaprenyl diphospho-[N-acetyl-alpha-D-glucosaminyl-(1-&gt;4)]-N-acetyl-alpha-D-muramoyl-L-alanyl-D-glutamyl-meso-2,6-diaminopimeloyl-D-alanyl-D-alanine + UDP + H(+). It participates in cell wall biogenesis; peptidoglycan biosynthesis. Its function is as follows. Cell wall formation. Catalyzes the transfer of a GlcNAc subunit on undecaprenyl-pyrophosphoryl-MurNAc-pentapeptide (lipid intermediate I) to form undecaprenyl-pyrophosphoryl-MurNAc-(pentapeptide)GlcNAc (lipid intermediate II). The sequence is that of UDP-N-acetylglucosamine--N-acetylmuramyl-(pentapeptide) pyrophosphoryl-undecaprenol N-acetylglucosamine transferase from Janthinobacterium sp. (strain Marseille) (Minibacterium massiliensis).